We begin with the raw amino-acid sequence, 3027 residues long: DmX-like protein 1 (3027 aa).

WD repeat units follow at residues Phe108–Glu145, Lys166–Val206, and Ala229–Leu277. Residues Ser324, Ser422, Ser425, and Ser436 each carry the phosphoserine modification. Over residues Pro420–Asp433 the composition is skewed to polar residues. The interval Pro420–Asn450 is disordered. Residues Asp476–Pro516 form a WD 4 repeat. Residues Lys563–Ser584 are disordered. Phosphoserine is present on Ser574. WD repeat units lie at residues Gly580 to Phe621, Ser628 to Asp665, and Gly848 to Ser895. A phosphoserine mark is found at Ser918 and Ser924. WD repeat units lie at residues Pro968–Ala1010, Ser1134–Gln1175, and Gly1211–Ile1251. Phosphoserine occurs at positions 1830, 1896, 1908, and 1970. Disordered regions lie at residues Pro2367–Pro2412 and Ser2446–Asp2468. The segment covering Asp2451–Asp2468 has biased composition (acidic residues). WD repeat units lie at residues Lys2742–Arg2783, Gly2785–Thr2824, Cys2836–Leu2878, Cys2884–Leu2923, Ser2926–Thr2965, and Asn2978–Asn3016.

In terms of tissue distribution, expressed in bone, breast, eye, foreskin, heart, parathyroid, small intestine, testis, tonsils, placenta and uterus.

This chain is DmX-like protein 1 (DMXL1), found in Homo sapiens (Human).